The following is a 296-amino-acid chain: dTDP-4-dehydrorhamnose reductase (296 aa).

Residues 10–12, 35–36, and 59–61 contribute to the NADH site; these read GQI, DL, and AYT. NADPH contacts are provided by residues 11–12, 35–36, and 59–61; these read QI, DL, and AYT. Position 100-101 (100-101) interacts with dTDP-beta-L-rhamnose; that stretch reads TD. Tyr124 and Lys128 together coordinate NADH. NADPH-binding residues include Tyr124 and Lys128. The active-site Proton donor/acceptor is the Tyr124. Trp149 contributes to the dTDP-beta-L-rhamnose binding site.

This sequence belongs to the dTDP-4-dehydrorhamnose reductase family. In terms of assembly, homodimer. Requires Mg(2+) as cofactor.

The catalysed reaction is dTDP-beta-L-rhamnose + NADP(+) = dTDP-4-dehydro-beta-L-rhamnose + NADPH + H(+). The protein operates within carbohydrate biosynthesis; dTDP-L-rhamnose biosynthesis. Functionally, involved in the biosynthesis of the dTDP-L-rhamnose which is an important component of lipopolysaccharide (LPS). Catalyzes the reduction of dTDP-6-deoxy-L-lyxo-4-hexulose to yield dTDP-L-rhamnose. RmlD uses NADH and NADPH nearly equally well. This Sinorhizobium fredii (strain NBRC 101917 / NGR234) protein is dTDP-4-dehydrorhamnose reductase.